The primary structure comprises 379 residues: Homoserine O-succinyltransferase (379 aa).

One can recognise an AB hydrolase-1 domain in the interval 51–360 (NAVLICHALS…DAPQGHDAFL (310 aa)). Residue S157 is the Nucleophile of the active site. Substrate is bound at residue R227. Residues D323 and H356 contribute to the active site. D357 provides a ligand contact to substrate.

Belongs to the AB hydrolase superfamily. MetX family. Homodimer.

It localises to the cytoplasm. The enzyme catalyses L-homoserine + succinyl-CoA = O-succinyl-L-homoserine + CoA. The protein operates within amino-acid biosynthesis; L-methionine biosynthesis via de novo pathway; O-succinyl-L-homoserine from L-homoserine: step 1/1. In terms of biological role, transfers a succinyl group from succinyl-CoA to L-homoserine, forming succinyl-L-homoserine. The chain is Homoserine O-succinyltransferase from Pseudomonas fluorescens (strain Pf0-1).